The following is a 138-amino-acid chain: Small ribosomal subunit protein uS9c (138 aa).

This sequence belongs to the universal ribosomal protein uS9 family.

The protein localises to the plastid. It is found in the chloroplast. This Trieres chinensis (Marine centric diatom) protein is Small ribosomal subunit protein uS9c (rps9).